We begin with the raw amino-acid sequence, 481 residues long: MSLLDYTAVELAAKIKAGETTATEAMEAVIAQIEKSEDELNCYVTFDKEKALAAAKKADEDIKAGKLTGPLAGVPFAIKDNMCTEGMLTTCSSKILGNFVPTYTADAVERLQNAGAVIIGKTNMDEFAMGSTTETSAFGATKNPRNPEHVPGGSSGGSAAAVAANECFAALGSDTGGSIRQPASYCGVVGLKPTYGTVSRYGLIAYGSSLDQIGPLCKDVTDCATIMEAIAGKDDKDSTSIGRDDYSFTNALVDDVKGMKIGIPRDYFGEGLDPEVKEAVLNAAKVLESKGAIVEEFDLSLVEYAIPTYYTIAAAEASSNLERFDGVKYGYRTKEYEGLHNMYKKTRSEGFGPEVKRRIMLGSFVLSSGYYDAYYLKALRVKALIKKAFDEAFAKYDVILGPVAPTTAPKLGSSLSDPIKMYLGDIYTISVNLAGLPGLSVPCGKDKNGLPIGLQLIGDCFKENNIIRAGYAYEQARGRFE.

Active-site charge relay system residues include Lys79 and Ser154. The disordered stretch occupies residues 136-157; sequence SAFGATKNPRNPEHVPGGSSGG. Ser178 acts as the Acyl-ester intermediate in catalysis.

The protein belongs to the amidase family. GatA subfamily. As to quaternary structure, heterotrimer of A, B and C subunits.

It catalyses the reaction L-glutamyl-tRNA(Gln) + L-glutamine + ATP + H2O = L-glutaminyl-tRNA(Gln) + L-glutamate + ADP + phosphate + H(+). Its function is as follows. Allows the formation of correctly charged Gln-tRNA(Gln) through the transamidation of misacylated Glu-tRNA(Gln) in organisms which lack glutaminyl-tRNA synthetase. The reaction takes place in the presence of glutamine and ATP through an activated gamma-phospho-Glu-tRNA(Gln). In Lachnospira eligens (strain ATCC 27750 / DSM 3376 / VPI C15-48 / C15-B4) (Eubacterium eligens), this protein is Glutamyl-tRNA(Gln) amidotransferase subunit A.